The chain runs to 296 residues: Nucleotide-binding protein stu0831 (296 aa).

13 to 20 (GMSGAGKT) contributes to the ATP binding site. 63–66 (DMRS) provides a ligand contact to GTP.

The protein belongs to the RapZ-like family.

In terms of biological role, displays ATPase and GTPase activities. The polypeptide is Nucleotide-binding protein stu0831 (Streptococcus thermophilus (strain ATCC BAA-250 / LMG 18311)).